The primary structure comprises 344 residues: MSNAITMGIFWHLIGAASAACFYAPFKKVKKWSWETMWSVGGIVSWIILPWAISALLLPNFWAYYSSFSLSTLLPVFLFGAMWGIGNINYGLTMRYLGMSMGIGIAIGITLIVGTLMTPIINGNFDVLINTEGGRMTLLGVLVALIGVGIVTRAGQLKERKMGIKAEEFNLKKGLVLAVMCGIFSAGMSFAMNAAKPMHEAAAALGVDPLYVALPSYVVIMGGGAIINLGFCFIRLAKVKDLSLKADFSLAKPLIFHNVLLSALGGLMWYLQFFFYAWGHARIPAQYDYISWMLHMSFYVLCGGIVGLVLKEWNNAGRRPVTVLSLGCVVIIVAANIVGMGMAN.

10 helical membrane passes run 4 to 24 (AITM…CFYA), 38 to 58 (WSVG…ALLL), 68 to 88 (FSLS…IGNI), 101 to 121 (MGIG…TPII), 137 to 157 (TLLG…AGQL), 175 to 195 (LVLA…MNAA), 214 to 234 (LPSY…FCFI), 259 to 279 (VLLS…YAWG), 290 to 310 (ISWM…GLVL), and 323 to 343 (VLSL…MGMA).

It belongs to the L-rhamnose transporter (TC 2.A.7.6) family.

It localises to the cell inner membrane. It catalyses the reaction L-rhamnopyranose(in) + H(+)(in) = L-rhamnopyranose(out) + H(+)(out). Its function is as follows. Uptake of L-rhamnose across the cytoplasmic membrane with the concomitant transport of protons into the cell (symport system). The sequence is that of L-rhamnose-proton symporter from Escherichia coli O17:K52:H18 (strain UMN026 / ExPEC).